A 190-amino-acid chain; its full sequence is NAD(P)H-quinone oxidoreductase subunit I (190 aa).

4Fe-4S ferredoxin-type domains follow at residues 55–84 (GRIHFEFDKCIACEVCVRVCPINLPVVDWT) and 95–124 (KHYSIDFGVCIFCGNCVEYCPTNCLSMTEE). Positions 64, 67, 70, 74, 104, 107, 110, and 114 each coordinate [4Fe-4S] cluster. Positions 169 to 190 (IEPHDLPAGSQRAGKRPEEITD) are disordered.

Belongs to the complex I 23 kDa subunit family. In terms of assembly, NDH-1 is composed of at least 11 different subunits. It depends on [4Fe-4S] cluster as a cofactor.

The protein localises to the cellular thylakoid membrane. It catalyses the reaction a plastoquinone + NADH + (n+1) H(+)(in) = a plastoquinol + NAD(+) + n H(+)(out). The enzyme catalyses a plastoquinone + NADPH + (n+1) H(+)(in) = a plastoquinol + NADP(+) + n H(+)(out). Its function is as follows. NDH-1 shuttles electrons from an unknown electron donor, via FMN and iron-sulfur (Fe-S) centers, to quinones in the respiratory and/or the photosynthetic chain. The immediate electron acceptor for the enzyme in this species is believed to be plastoquinone. Couples the redox reaction to proton translocation, and thus conserves the redox energy in a proton gradient. This is NAD(P)H-quinone oxidoreductase subunit I from Microcystis aeruginosa (strain NIES-843 / IAM M-2473).